The sequence spans 227 residues: Cytochrome c oxidase subunit 2 (227 aa).

Met1 is subject to N-formylmethionine. Residues 1–14 (MAYPMQLGFQDATS) are Mitochondrial intermembrane-facing. A helical membrane pass occupies residues 15 to 45 (PIMEELLHFHDHTLMIVFLISSLVLYIISLM). The Mitochondrial matrix portion of the chain corresponds to 46-59 (LTTKLTHTSTMDAQ). Residues 60 to 87 (EVETIWTILPAIILILIALPSLRILYMM) form a helical membrane-spanning segment. Residues 88–227 (DEINNPSLTV…YFEKWSASML (140 aa)) are Mitochondrial intermembrane-facing. The Cu cation site is built by His161, Cys196, Glu198, Cys200, His204, and Met207. Glu198 serves as a coordination point for Mg(2+). Position 218 is a phosphotyrosine (Tyr218).

It belongs to the cytochrome c oxidase subunit 2 family. As to quaternary structure, component of the cytochrome c oxidase (complex IV, CIV), a multisubunit enzyme composed of 14 subunits. The complex is composed of a catalytic core of 3 subunits MT-CO1, MT-CO2 and MT-CO3, encoded in the mitochondrial DNA, and 11 supernumerary subunits COX4I, COX5A, COX5B, COX6A, COX6B, COX6C, COX7A, COX7B, COX7C, COX8 and NDUFA4, which are encoded in the nuclear genome. The complex exists as a monomer or a dimer and forms supercomplexes (SCs) in the inner mitochondrial membrane with NADH-ubiquinone oxidoreductase (complex I, CI) and ubiquinol-cytochrome c oxidoreductase (cytochrome b-c1 complex, complex III, CIII), resulting in different assemblies (supercomplex SCI(1)III(2)IV(1) and megacomplex MCI(2)III(2)IV(2)). Found in a complex with TMEM177, COA6, COX18, COX20, SCO1 and SCO2. Interacts with TMEM177 in a COX20-dependent manner. Interacts with COX20. Interacts with COX16. Cu cation is required as a cofactor.

The protein resides in the mitochondrion inner membrane. It carries out the reaction 4 Fe(II)-[cytochrome c] + O2 + 8 H(+)(in) = 4 Fe(III)-[cytochrome c] + 2 H2O + 4 H(+)(out). Component of the cytochrome c oxidase, the last enzyme in the mitochondrial electron transport chain which drives oxidative phosphorylation. The respiratory chain contains 3 multisubunit complexes succinate dehydrogenase (complex II, CII), ubiquinol-cytochrome c oxidoreductase (cytochrome b-c1 complex, complex III, CIII) and cytochrome c oxidase (complex IV, CIV), that cooperate to transfer electrons derived from NADH and succinate to molecular oxygen, creating an electrochemical gradient over the inner membrane that drives transmembrane transport and the ATP synthase. Cytochrome c oxidase is the component of the respiratory chain that catalyzes the reduction of oxygen to water. Electrons originating from reduced cytochrome c in the intermembrane space (IMS) are transferred via the dinuclear copper A center (CU(A)) of subunit 2 and heme A of subunit 1 to the active site in subunit 1, a binuclear center (BNC) formed by heme A3 and copper B (CU(B)). The BNC reduces molecular oxygen to 2 water molecules using 4 electrons from cytochrome c in the IMS and 4 protons from the mitochondrial matrix. This chain is Cytochrome c oxidase subunit 2 (MT-CO2), found in Bos indicus (Zebu).